The sequence spans 426 residues: Probable imidazolonepropionase (426 aa).

2 residues coordinate 4-imidazolone-5-propanoate: tyrosine 159 and histidine 192. An N-formimidoyl-L-glutamate-binding site is contributed by tyrosine 159. Histidine 260 is a Fe(3+) binding site. Histidine 260 serves as a coordination point for Zn(2+). Glutamate 263 contributes to the 4-imidazolone-5-propanoate binding site. Residue aspartate 334 coordinates Fe(3+). Aspartate 334 serves as a coordination point for Zn(2+). Position 336 (asparagine 336) interacts with N-formimidoyl-L-glutamate.

Belongs to the metallo-dependent hydrolases superfamily. HutI family. It depends on Zn(2+) as a cofactor. Fe(3+) serves as cofactor.

The catalysed reaction is 4-imidazolone-5-propanoate + H2O = N-formimidoyl-L-glutamate. Its pathway is amino-acid degradation; L-histidine degradation into L-glutamate; N-formimidoyl-L-glutamate from L-histidine: step 3/3. In Bos taurus (Bovine), this protein is Probable imidazolonepropionase (AMDHD1).